The sequence spans 475 residues: Ribulose bisphosphate carboxylase large chain (475 aa).

A propeptide spanning residues 1–2 (MS) is cleaved from the precursor. N-acetylproline is present on proline 3. An N6,N6,N6-trimethyllysine modification is found at lysine 14. Asparagine 123 and threonine 173 together coordinate substrate. Residue lysine 175 is the Proton acceptor of the active site. Substrate is bound at residue lysine 177. The Mg(2+) site is built by lysine 201, aspartate 203, and glutamate 204. Lysine 201 is subject to N6-carboxylysine. Histidine 294 (proton acceptor) is an active-site residue. 3 residues coordinate substrate: arginine 295, histidine 327, and serine 379.

It belongs to the RuBisCO large chain family. Type I subfamily. Heterohexadecamer of 8 large chains and 8 small chains; disulfide-linked. The disulfide link is formed within the large subunit homodimers. Mg(2+) is required as a cofactor. The disulfide bond which can form in the large chain dimeric partners within the hexadecamer appears to be associated with oxidative stress and protein turnover.

The protein resides in the plastid. It is found in the chloroplast. The catalysed reaction is 2 (2R)-3-phosphoglycerate + 2 H(+) = D-ribulose 1,5-bisphosphate + CO2 + H2O. It carries out the reaction D-ribulose 1,5-bisphosphate + O2 = 2-phosphoglycolate + (2R)-3-phosphoglycerate + 2 H(+). Its function is as follows. RuBisCO catalyzes two reactions: the carboxylation of D-ribulose 1,5-bisphosphate, the primary event in carbon dioxide fixation, as well as the oxidative fragmentation of the pentose substrate in the photorespiration process. Both reactions occur simultaneously and in competition at the same active site. The chain is Ribulose bisphosphate carboxylase large chain from Afrocarpus gracilior (African fern pine).